Here is a 401-residue protein sequence, read N- to C-terminus: Acetate kinase (401 aa).

A Mg(2+)-binding site is contributed by Asn7. Residue Lys14 coordinates ATP. Residue Arg92 participates in substrate binding. Asp149 functions as the Proton donor/acceptor in the catalytic mechanism. Residues 209 to 213 (HLGNG), 283 to 285 (DAR), and 331 to 335 (GLGEN) contribute to the ATP site. Residue Glu385 participates in Mg(2+) binding.

It belongs to the acetokinase family. Homodimer. The cofactor is Mg(2+). Mn(2+) serves as cofactor.

The protein resides in the cytoplasm. It catalyses the reaction acetate + ATP = acetyl phosphate + ADP. The protein operates within metabolic intermediate biosynthesis; acetyl-CoA biosynthesis; acetyl-CoA from acetate: step 1/2. In terms of biological role, catalyzes the formation of acetyl phosphate from acetate and ATP. Can also catalyze the reverse reaction. This is Acetate kinase from Helicobacter pylori (strain Shi470).